The chain runs to 469 residues: Adenosylhomocysteinase (469 aa).

Substrate contacts are provided by Thr63, Asp139, and Glu164. 165-167 (TTT) is a binding site for NAD(+). Substrate contacts are provided by Lys194 and Asp198. NAD(+) is bound by residues Asn199, 228-233 (GYGDVG), Glu251, Asn300, 321-323 (IGH), and Asn375.

It belongs to the adenosylhomocysteinase family. NAD(+) serves as cofactor.

The protein localises to the cytoplasm. It carries out the reaction S-adenosyl-L-homocysteine + H2O = L-homocysteine + adenosine. Its pathway is amino-acid biosynthesis; L-homocysteine biosynthesis; L-homocysteine from S-adenosyl-L-homocysteine: step 1/1. In terms of biological role, may play a key role in the regulation of the intracellular concentration of adenosylhomocysteine. The polypeptide is Adenosylhomocysteinase (Pseudomonas fluorescens (strain Pf0-1)).